A 299-amino-acid polypeptide reads, in one-letter code: DNA-binding transcriptional repressor CapW (299 aa).

The winged HTH domain stretch occupies residues 1 to 84; sequence MESSGSSKVR…EFKPITKRSE (84 aa). The tract at residues 85 to 196 is WYL domain; the sequence is ATRYLNELQR…IGRLDVLEHV (112 aa). Residues 120–200 form the WYL domain; sequence SRAIEADEVA…DVLEHVFSAK (81 aa). The segment at 145-189 is probable ligand-binding region; that stretch reads YQSMDAPEPQEWVLSPHALGFDGLRWHARAWCHARQVFRDFAIGR. The interval 197-299 is WCX domain; that stretch reads FSAKPVDPLL…DRDGLQHLRR (103 aa).

In terms of assembly, homodimer.

Its function is as follows. Transcriptional regulator of a CBASS antivirus system. CBASS (cyclic oligonucleotide-based antiphage signaling system) provides immunity against bacteriophage. The CD-NTase protein synthesizes cyclic nucleotides in response to infection; these serve as specific second messenger signals. The signals activate a diverse range of effectors, leading to bacterial cell death and thus abortive phage infection. A type III CBASS system, part of a CapW-Cap6-Cap8-Cap7-CdnC-NucC locus. Binds specifically to palindromes that overlap the -10 site in the promoter of cap6, found beween found between the genes for divergently transcribed capW and cap6 (cognate DNA). Probably represses transcription bidirectionally from the promoter. Mutations that make it a constitutive repressor in E.coli do not change DNA-binding affinity. The polypeptide is DNA-binding transcriptional repressor CapW (Stenotrophomonas maltophilia (Pseudomonas maltophilia)).